A 441-amino-acid chain; its full sequence is MSCCKVPVLIEAQVEMVSANELENKSLFRQEEDATQTKEASLMEQGSLSTSFPQHTPKAPKNSVLNSIKIVIFCNKLNLLLPFGPLAILVHYMIDSKGWVFLLTLVGITPLAERLGYATEQLACYTGPTVGGLLNATFGNVTELIISIFALKNGMIRVVQLTLLGSILSNMLLVLGCAFFCGGLVFYQKDQVFDKGIATVNSGLLLMAVMGILFPAVLHYTHSEVHAGSSELALSRFSSCIMLIAYAAYLFFQLKSQSNSYSPLDEESNQNEETSAEDEDPEISKWEAIIWLSILTAWVSLLSGYLVDAIEGASVSWNIPIAFISTILLPIVGNAAEHAGAIMFAMKDKLDLSLGVAIGSSIQISMFAVPFCVVIGWMMGQQMDLNFQLFETAMLFITVIVVAFFLQEGSSNYFKGLMLILCYLIVAASFFVHEDPHQDGI.

The Cytoplasmic portion of the chain corresponds to 1 to 69 (MSCCKVPVLI…PKNSVLNSIK (69 aa)). The helical transmembrane segment at 70–90 (IVIFCNKLNLLLPFGPLAILV) threads the bilayer. At 91–97 (HYMIDSK) the chain is on the extracellular side. A helical transmembrane segment spans residues 98–118 (GWVFLLTLVGITPLAERLGYA). The Cytoplasmic segment spans residues 119-129 (TEQLACYTGPT). The helical transmembrane segment at 130–150 (VGGLLNATFGNVTELIISIFA) threads the bilayer. The interval 139-174 (GNVTELIISIFALKNGMIRVVQLTLLGSILSNMLLV) is cation selection. Residues 151 to 166 (LKNGMIRVVQLTLLGS) lie on the Extracellular side of the membrane. Residues 167-187 (ILSNMLLVLGCAFFCGGLVFY) form a helical membrane-spanning segment. Residues 188-196 (QKDQVFDKG) are Cytoplasmic-facing. A helical transmembrane segment spans residues 197 to 217 (IATVNSGLLLMAVMGILFPAV). Residues 218 to 231 (LHYTHSEVHAGSSE) are Extracellular-facing. A helical membrane pass occupies residues 232–252 (LALSRFSSCIMLIAYAAYLFF). The Cytoplasmic segment spans residues 253-286 (QLKSQSNSYSPLDEESNQNEETSAEDEDPEISKW). A helical membrane pass occupies residues 287 to 307 (EAIIWLSILTAWVSLLSGYLV). Over 308-311 (DAIE) the chain is Extracellular. Residues 312–332 (GASVSWNIPIAFISTILLPIV) form a helical membrane-spanning segment. The Cytoplasmic segment spans residues 333–354 (GNAAEHAGAIMFAMKDKLDLSL). The segment at 333–368 (GNAAEHAGAIMFAMKDKLDLSLGVAIGSSIQISMFA) is cation selection. Residues 355–375 (GVAIGSSIQISMFAVPFCVVI) traverse the membrane as a helical segment. Topologically, residues 376-384 (GWMMGQQMD) are extracellular. A helical transmembrane segment spans residues 385–405 (LNFQLFETAMLFITVIVVAFF). Residues 406–412 (LQEGSSN) are Cytoplasmic-facing. The helical transmembrane segment at 413-433 (YFKGLMLILCYLIVAASFFVH) threads the bilayer. At 434–441 (EDPHQDGI) the chain is on the extracellular side.

It belongs to the Ca(2+):cation antiporter (CaCA) (TC 2.A.19) family. Cation/proton exchanger (CAX) subfamily.

The protein resides in the vacuole membrane. With respect to regulation, inhibited by excess of Ca(2+) and Cd(2+), Mn(2+), and Zn(2+). Functionally, vacuolar cation/proton exchanger (CAX). Translocates Ca(2+) and other metal ions into vacuoles using the proton gradient formed by H(+)-ATPase and H(+)-pyrophosphatase. In Arabidopsis thaliana (Mouse-ear cress), this protein is Vacuolar cation/proton exchanger 2 (CAX2).